The primary structure comprises 160 residues: Phosphopantetheine adenylyltransferase (160 aa).

Position 9 (Ser-9) interacts with substrate. ATP contacts are provided by residues 9–10 and His-17; that span reads SF. Residues Lys-41, Ile-73, and Lys-87 each contribute to the substrate site. ATP is bound by residues 88 to 90, Glu-98, and 122 to 128; these read GLR and YSFVSSS.

Belongs to the bacterial CoaD family. Homohexamer. Requires Mg(2+) as cofactor.

Its subcellular location is the cytoplasm. It carries out the reaction (R)-4'-phosphopantetheine + ATP + H(+) = 3'-dephospho-CoA + diphosphate. It participates in cofactor biosynthesis; coenzyme A biosynthesis; CoA from (R)-pantothenate: step 4/5. Reversibly transfers an adenylyl group from ATP to 4'-phosphopantetheine, yielding dephospho-CoA (dPCoA) and pyrophosphate. The sequence is that of Phosphopantetheine adenylyltransferase from Mycolicibacterium vanbaalenii (strain DSM 7251 / JCM 13017 / BCRC 16820 / KCTC 9966 / NRRL B-24157 / PYR-1) (Mycobacterium vanbaalenii).